The primary structure comprises 119 residues: Ribosome-binding factor A (119 aa).

This sequence belongs to the RbfA family. Monomer. Binds 30S ribosomal subunits, but not 50S ribosomal subunits or 70S ribosomes.

The protein localises to the cytoplasm. Its function is as follows. One of several proteins that assist in the late maturation steps of the functional core of the 30S ribosomal subunit. Associates with free 30S ribosomal subunits (but not with 30S subunits that are part of 70S ribosomes or polysomes). Required for efficient processing of 16S rRNA. May interact with the 5'-terminal helix region of 16S rRNA. This chain is Ribosome-binding factor A, found in Citrifermentans bemidjiense (strain ATCC BAA-1014 / DSM 16622 / JCM 12645 / Bem) (Geobacter bemidjiensis).